A 401-amino-acid chain; its full sequence is MTALSQSEPSLSASSDSSTDALVQKAKRHLLQNYKQPPFVLARGQGARVWDMDGREYLDLIGGIATCALGHCHPEVVAAAKAQLDSLWHVSNVFYSQPQIDLAAQLTEWSGLSRAFFCNSGAEANEALLKLTRKVMKDRGTPERFEVISFDSSFHGRTLATVTATGQAKYQKGFEPLPAGFTHVPYGDLEAVRKAVGPATAAILVEPIQGEGGVRMAPLGFLVGLRALCDEHGLLLLVDEVQTGMGRTGKPFGFMHEGIVPDGISVAKALGNGLPIGAMLCKEELGASLTPGTHGSTFGGNPVAAAAANAVVRILRRPGFLDEVQEKGAYLLARARELQGRLPAGRIQAVRGQGLLVGVQLDHKVAPVIAQVHEEGLLVNPAGDRTMLFAPPFIVTVRELD.

Residues 121 to 122 and F154 contribute to the pyridoxal 5'-phosphate site; that span reads GA. A N(2)-acetyl-L-ornithine-binding site is contributed by R157. 239–242 is a pyridoxal 5'-phosphate binding site; sequence DEVQ. At K268 the chain carries N6-(pyridoxal phosphate)lysine. S296 serves as a coordination point for N(2)-acetyl-L-ornithine. T297 contacts pyridoxal 5'-phosphate.

Belongs to the class-III pyridoxal-phosphate-dependent aminotransferase family. ArgD subfamily. Homodimer. It depends on pyridoxal 5'-phosphate as a cofactor.

The protein resides in the cytoplasm. The catalysed reaction is N(2)-acetyl-L-ornithine + 2-oxoglutarate = N-acetyl-L-glutamate 5-semialdehyde + L-glutamate. Its pathway is amino-acid biosynthesis; L-arginine biosynthesis; N(2)-acetyl-L-ornithine from L-glutamate: step 4/4. The chain is Acetylornithine aminotransferase from Myxococcus xanthus.